The primary structure comprises 309 residues: Porphobilinogen deaminase (309 aa).

S-(dipyrrolylmethanemethyl)cysteine is present on C242.

This sequence belongs to the HMBS family. Monomer. Requires dipyrromethane as cofactor.

It carries out the reaction 4 porphobilinogen + H2O = hydroxymethylbilane + 4 NH4(+). Its pathway is porphyrin-containing compound metabolism; protoporphyrin-IX biosynthesis; coproporphyrinogen-III from 5-aminolevulinate: step 2/4. Tetrapolymerization of the monopyrrole PBG into the hydroxymethylbilane pre-uroporphyrinogen in several discrete steps. In Legionella pneumophila (strain Lens), this protein is Porphobilinogen deaminase.